We begin with the raw amino-acid sequence, 246 residues long: Type III pantothenate kinase (246 aa).

Residue 6–13 (DVGNTHSV) coordinates ATP. 103–106 (GADR) contacts substrate. Aspartate 105 functions as the Proton acceptor in the catalytic mechanism. A K(+)-binding site is contributed by aspartate 125. Residue threonine 128 coordinates ATP. Threonine 179 is a substrate binding site.

Belongs to the type III pantothenate kinase family. Homodimer. NH4(+) serves as cofactor. The cofactor is K(+).

It localises to the cytoplasm. It carries out the reaction (R)-pantothenate + ATP = (R)-4'-phosphopantothenate + ADP + H(+). Its pathway is cofactor biosynthesis; coenzyme A biosynthesis; CoA from (R)-pantothenate: step 1/5. Functionally, catalyzes the phosphorylation of pantothenate (Pan), the first step in CoA biosynthesis. The protein is Type III pantothenate kinase (coaX) of Thermotoga maritima (strain ATCC 43589 / DSM 3109 / JCM 10099 / NBRC 100826 / MSB8).